The following is a 1233-amino-acid chain: uncharacterized protein (1233 aa).

Disordered stretches follow at residues 32-51 (SETS…TPKP), 510-529 (ATTN…PVPD), and 882-915 (EVIE…IERS). Composition is skewed to acidic residues over residues 513-529 (NEEE…PVPD) and 882-905 (EVIE…EDEG). Residues 906–915 (DNKQRVIERS) show a composition bias toward basic and acidic residues.

This is an uncharacterized protein from Dictyostelium discoideum (Social amoeba).